Reading from the N-terminus, the 316-residue chain is Ribosomal RNA small subunit methyltransferase H (316 aa).

S-adenosyl-L-methionine-binding positions include 35-37 (SGH), Asp55, Phe84, Asp105, and Gln112.

This sequence belongs to the methyltransferase superfamily. RsmH family.

It is found in the cytoplasm. The enzyme catalyses cytidine(1402) in 16S rRNA + S-adenosyl-L-methionine = N(4)-methylcytidine(1402) in 16S rRNA + S-adenosyl-L-homocysteine + H(+). In terms of biological role, specifically methylates the N4 position of cytidine in position 1402 (C1402) of 16S rRNA. The protein is Ribosomal RNA small subunit methyltransferase H of Streptococcus pyogenes serotype M49 (strain NZ131).